The chain runs to 377 residues: Deoxyribonuclease CdiA-o11 (377 aa).

Residues 81–84 (VENN) carry the VENN CT cleavage motif motif. The inner membrane translocation domain (IMTD), targets to YciB stretch occupies residues 85–233 (YLSTNQSLTF…ISFMSRNTAT (149 aa)). The segment at 88–377 (TNQSLTFDKE…GVKVTVTQVK (290 aa)) is CT domain, sufficient to interact with CdiI. The has DNase activity in vivo, cannot be expressed in the absence of CdiI stretch occupies residues 222–377 (AAISFMSRNT…GVKVTVTQVK (156 aa)). Catalysis depends on residues E257, D278, S289, and K291. 2 residues coordinate Zn(2+): E257 and D278.

In terms of assembly, interacts with cognate immunity protein CdiI-o11-EC869, which blocks its toxic DNase activity. The cofactor is Zn(2+).

The protein resides in the target cell. It is found in the target cell cytoplasm. Its function is as follows. Toxic component of a toxin-immunity protein module, which functions as a cellular contact-dependent growth inhibition (CDI) system. CDI modules allow bacteria to communicate with and inhibit the growth of closely related neighboring bacteria in a contact-dependent fashion. The C-terminal 289 residues (the CT fragment) has a strong DNase activity in the presence of Zn(2+), completely degrading supercoiled and linear plasmids, and inhibits growth. In the presence of Mg(2+) it nicks dsDNA. Toxic activity is neutralized by coexpression of the cognate immunity protein CdiI-o11-EC869, but not by non-cognate immunity proteins from other toxin-immunity modules or other strains of E.coli. Gains access to the cytoplasm of target cells by using integral inner membrane protein YciB. In terms of biological role, expression of this locus confers protection against other bacteria carrying the locus. This chain is Deoxyribonuclease CdiA-o11 (cdiA4), found in Escherichia coli O157:H7 (strain EC869).